A 378-amino-acid polypeptide reads, in one-letter code: Probable S-(hydroxymethyl)glutathione dehydrogenase 1 (378 aa).

Cys-47 is a binding site for Zn(2+). His-48 contributes to the NAD(+) binding site. Residues His-69, Glu-70, Cys-99, Cys-102, Cys-105, Cys-113, and Cys-176 each coordinate Zn(2+). NAD(+) is bound by residues 201–206 (GCGCVG), Asp-225, 293–295 (IGV), and 318–320 (SAF).

Belongs to the zinc-containing alcohol dehydrogenase family. Class-III subfamily. Requires Zn(2+) as cofactor.

The enzyme catalyses a primary alcohol + NAD(+) = an aldehyde + NADH + H(+). It catalyses the reaction a secondary alcohol + NAD(+) = a ketone + NADH + H(+). The catalysed reaction is S-(hydroxymethyl)glutathione + NADP(+) = S-formylglutathione + NADPH + H(+). It carries out the reaction S-(hydroxymethyl)glutathione + NAD(+) = S-formylglutathione + NADH + H(+). The enzyme catalyses S-nitrosoglutathione + NADH + H(+) = S-(hydroxysulfenamide)glutathione + NAD(+). Oxidizes long-chain alcohols and, in the presence of glutathione, is able to oxidize formaldehyde. Also acts as a S-nitroso-glutathione reductase by catalyzing the NADH-dependent reduction of S-nitrosoglutathione, thereby regulating protein S-nitrosylation. This Schizosaccharomyces pombe (strain 972 / ATCC 24843) (Fission yeast) protein is Probable S-(hydroxymethyl)glutathione dehydrogenase 1.